Reading from the N-terminus, the 795-residue chain is Phenylalanine--tRNA ligase beta subunit (795 aa).

Positions 39–148 (AGTFNGVVVG…LDAPIGTDLR (110 aa)) constitute a tRNA-binding domain. The B5 domain maps to 401–476 (PKVNTVQLRR…RIYGYNSIPN (76 aa)). 4 residues coordinate Mg(2+): aspartate 454, aspartate 460, glutamate 463, and glutamate 464. The region spanning 701–794 (SKFPANRRDL…VKQRFNAELR (94 aa)) is the FDX-ACB domain.

Belongs to the phenylalanyl-tRNA synthetase beta subunit family. Type 1 subfamily. As to quaternary structure, tetramer of two alpha and two beta subunits. It depends on Mg(2+) as a cofactor.

It is found in the cytoplasm. It carries out the reaction tRNA(Phe) + L-phenylalanine + ATP = L-phenylalanyl-tRNA(Phe) + AMP + diphosphate + H(+). The polypeptide is Phenylalanine--tRNA ligase beta subunit (Haemophilus influenzae (strain 86-028NP)).